The sequence spans 125 residues: Histone H2A, orphon (125 aa).

The span at 1 to 18 (MSGRGKGGKVKAKAKSRS) shows a compositional bias: basic residues. A disordered region spans residues 1-21 (MSGRGKGGKVKAKAKSRSSRA). Residue Ser-2 is modified to N-acetylserine. A Phosphoserine modification is found at Ser-2. A Glycyl lysine isopeptide (Lys-Gly) (interchain with G-Cter in ubiquitin) cross-link involves residue Lys-119.

This sequence belongs to the histone H2A family. In terms of assembly, the nucleosome is a histone octamer containing two molecules each of H2A, H2B, H3 and H4 assembled in one H3-H4 heterotetramer and two H2A-H2B heterodimers. The octamer wraps approximately 147 bp of DNA. Monoubiquitination of Lys-119 gives a specific tag for epigenetic transcriptional repression. Post-translationally, phosphorylation on Ser-2 is enhanced during mitosis. Phosphorylation on Ser-2 directly represses transcription.

The protein resides in the nucleus. It localises to the chromosome. Functionally, core component of nucleosome. Nucleosomes wrap and compact DNA into chromatin, limiting DNA accessibility to the cellular machineries which require DNA as a template. Histones thereby play a central role in transcription regulation, DNA repair, DNA replication and chromosomal stability. DNA accessibility is regulated via a complex set of post-translational modifications of histones, also called histone code, and nucleosome remodeling. This Chironomus thummi thummi (Midge) protein is Histone H2A, orphon.